A 436-amino-acid chain; its full sequence is GTPase Der (436 aa).

2 consecutive EngA-type G domains span residues 4 to 167 (SVVA…PNES) and 176 to 351 (IYFS…ESHT). Residues 10–17 (GRPNVGKS), 57–61 (DTGGI), 119–122 (NKMD), 182–189 (GRPNVGKS), 229–233 (DTAGM), and 294–297 (NKWD) each bind GTP. The KH-like domain maps to 352–436 (KRIPTNVLND…PIKLFARRRQ (85 aa)).

This sequence belongs to the TRAFAC class TrmE-Era-EngA-EngB-Septin-like GTPase superfamily. EngA (Der) GTPase family. In terms of assembly, associates with the 50S ribosomal subunit.

GTPase that plays an essential role in the late steps of ribosome biogenesis. The protein is GTPase Der of Oceanobacillus iheyensis (strain DSM 14371 / CIP 107618 / JCM 11309 / KCTC 3954 / HTE831).